Consider the following 348-residue polypeptide: Dihydroorotase (348 aa).

His-17 and His-19 together coordinate Zn(2+). Residues 19–21 (HLR) and Asn-45 each bind substrate. Zn(2+) is bound by residues Lys-103, His-140, and His-178. Lys-103 carries the N6-carboxylysine modification. His-140 is a binding site for substrate. Residue Leu-223 participates in substrate binding. Asp-251 is a binding site for Zn(2+). Asp-251 is a catalytic residue. Residues His-255 and Ala-267 each contribute to the substrate site.

This sequence belongs to the metallo-dependent hydrolases superfamily. DHOase family. Class II DHOase subfamily. In terms of assembly, homodimer. Zn(2+) serves as cofactor.

The enzyme catalyses (S)-dihydroorotate + H2O = N-carbamoyl-L-aspartate + H(+). The protein operates within pyrimidine metabolism; UMP biosynthesis via de novo pathway; (S)-dihydroorotate from bicarbonate: step 3/3. Its function is as follows. Catalyzes the reversible cyclization of carbamoyl aspartate to dihydroorotate. The sequence is that of Dihydroorotase from Yersinia enterocolitica serotype O:8 / biotype 1B (strain NCTC 13174 / 8081).